The sequence spans 418 residues: Tyrosine--tRNA ligase (418 aa).

Y34 contributes to the L-tyrosine binding site. The 'HIGH' region motif lies at 39 to 48; sequence PTADSLHLGH. L-tyrosine is bound by residues Y169 and Q173. The 'KMSKS' region motif lies at 229–233; it reads KFGKS. K232 lines the ATP pocket. The region spanning 352–418 is the S4 RNA-binding domain; it reads HNIVEILVAA…GKKKYAVLTY (67 aa).

It belongs to the class-I aminoacyl-tRNA synthetase family. TyrS type 1 subfamily. As to quaternary structure, homodimer.

The protein resides in the cytoplasm. The catalysed reaction is tRNA(Tyr) + L-tyrosine + ATP = L-tyrosyl-tRNA(Tyr) + AMP + diphosphate + H(+). Catalyzes the attachment of tyrosine to tRNA(Tyr) in a two-step reaction: tyrosine is first activated by ATP to form Tyr-AMP and then transferred to the acceptor end of tRNA(Tyr). The sequence is that of Tyrosine--tRNA ligase from Streptococcus pyogenes serotype M1.